Reading from the N-terminus, the 550-residue chain is Sterol O-acyltransferase 1 (550 aa).

M1 carries the N-acetylmethionine modification. The segment at 1–36 (MVGEEKMSLRNRLSKSRENPEEDEDQRKPAKESLEA) is disordered. Residues 1 to 138 (MVGEEKMSLR…LDELLEVDHI (138 aa)) lie on the Cytoplasmic side of the membrane. At S8 the chain carries Phosphoserine. Basic and acidic residues predominate over residues 15–34 (KSRENPEEDEDQRKPAKESL). H137 contributes to the cholesterol binding site. A helical transmembrane segment spans residues 139-160 (RTIYHMFIALLILFILSTLVVD). Residues 161-180 (YIDEGRLVLEFSLLSYAFGK) are Lumenal-facing. Residues 181 to 206 (FPTVVWTWWIMFLSTFSVPYFLFQRW) traverse the membrane as a helical segment. Residues 207-218 (ATGYSKSSHPLI) lie on the Cytoplasmic side of the membrane. Residues 219–244 (NSLFHGFLFMVFQIGILGFGPTYVVL) traverse the membrane as a helical segment. Topologically, residues 245 to 252 (AYTLPPAS) are lumenal. A helical membrane pass occupies residues 253–276 (RFIIIFEQIRFVMKAHSFVRENVP). Topologically, residues 277–319 (RVLNSAKEKSSTVPIPTVNQYLYFLFAPTLIYRDSYPRNPTVR) are cytoplasmic. The chain crosses the membrane as a helical span at residues 320–352 (WGYVAMQFAQVFGCFFYVYYIFERLCAPLFRNI). Residues 353 to 369 (KQEPFSARVLVLCVFNS) are Lumenal-facing. The chain crosses the membrane as a helical span at residues 370 to 395 (ILPGVLILFLTFFAFLHCWLNAFAEM). Over 396–443 (LRFGDRMFYKDWWNSTSYSNYYRTWNVVVHDWLYYYAYKDFLWFFSKR) the chain is Cytoplasmic. The FYXDWWN motif signature appears at 403–409 (FYKDWWN). An acyl-CoA is bound by residues N415, R418, N421, H425, Y433, K445, and S456. A helical transmembrane segment spans residues 444 to 468 (FKSAAMLAAFAVSAVVHEYALAVCL). H460 is an active-site residue. Topologically, residues 469-474 (SFFYPV) are lumenal. The chain crosses the membrane as a helical span at residues 475 to 490 (LFVLFMFFGMAFNFIV). The Cytoplasmic segment spans residues 491 to 496 (NDSRKK). A helical membrane pass occupies residues 497–528 (PIWNVMMWTSLFLGNGVLLCFYSQEWYARQHC). A disulfide bond links C528 and C546. Residues 529–550 (PLKNPTFLDYVRPRSWTCRYVF) lie on the Lumenal side of the membrane.

Belongs to the membrane-bound acyltransferase family. Sterol o-acyltransferase subfamily. As to quaternary structure, may form homo- or heterodimers. Interacts with UBIAD1. Expressed in most tissues, but most strongly in the adrenal gland. Expressed more strongly in liver Kupffer cells than in hepatocytes.

The protein localises to the endoplasmic reticulum membrane. It carries out the reaction a sterol + a long-chain fatty acyl-CoA = a long-chain 3-hydroxysterol ester + CoA. The catalysed reaction is cholesterol + an acyl-CoA = a cholesterol ester + CoA. It catalyses the reaction cholesterol + (9Z)-octadecenoyl-CoA = cholesteryl (9Z-octadecenoate) + CoA. The enzyme catalyses cholesterol + hexadecanoyl-CoA = cholesteryl hexadecanoate + CoA. It carries out the reaction octadecanoyl-CoA + cholesterol = cholesteryl octadecanoate + CoA. The catalysed reaction is (9Z,12Z)-octadecadienoyl-CoA + cholesterol = cholesteryl (9Z,12Z)-octadecadienoate + CoA. It catalyses the reaction (5Z,8Z,11Z,14Z)-eicosatetraenoyl-CoA + cholesterol = cholesteryl (5Z,8Z,11Z,14Z)-eicosatetraenoate + CoA. The enzyme catalyses (9Z)-hexadecenoyl-CoA + cholesterol = cholesteryl (9Z)-hexadecenoate + CoA. It carries out the reaction (11Z)-octadecenoyl-CoA + cholesterol = cholesteryl (11Z)-octadecenoate + CoA. The catalysed reaction is (7Z)-octadecenoyl-CoA + cholesterol = cholesteryl (7Z)-octadecenoate + CoA. Catalyzes the formation of fatty acid-cholesterol esters, which are less soluble in membranes than cholesterol. Plays a role in lipoprotein assembly and dietary cholesterol absorption. Preferentially utilizes oleoyl-CoA ((9Z)-octadecenoyl-CoA) as a substrate: shows a higher activity towards an acyl-CoA substrate with a double bond at the delta-9 position (9Z) than towards saturated acyl-CoA or an unsaturated acyl-CoA with a double bond at the delta-7 (7Z) or delta-11 (11Z) positions. The chain is Sterol O-acyltransferase 1 (SOAT1) from Macaca fascicularis (Crab-eating macaque).